Reading from the N-terminus, the 76-residue chain is UPF0248 protein PAE2518 (76 aa).

Belongs to the UPF0248 family.

This Pyrobaculum aerophilum (strain ATCC 51768 / DSM 7523 / JCM 9630 / CIP 104966 / NBRC 100827 / IM2) protein is UPF0248 protein PAE2518.